Reading from the N-terminus, the 406-residue chain is Erythromycin esterase type I (406 aa).

Functionally, this enzyme confers resistance to erythromycin through inactivation by hydrolyzing the lactone ring of the antibiotic. The protein is Erythromycin esterase type I (ereA) of Escherichia coli.